Reading from the N-terminus, the 446-residue chain is SWI/SNF chromatin-remodeling accessory subunit 1 (446 aa).

A disordered region spans residues 1–53 (MQTQARPPVPQGPRFNHPATPQQVRRPINAPLPGQTAQIQGNRGPQPPKKKKR). The 78-residue stretch at 220–297 (YQPMKFKLHP…PQRLHQLLQQ (78 aa)) folds into the SWIB/MDM2 domain.

The protein belongs to the SMARCD family. Component of the multiprotein chromatin-remodeling complexes SWI/SNF: SWI/SNF-A (BAF), SWI/SNF-B (PBAF) and related complexes. The canonical complex contains a catalytic subunit swsn-4, core subunits swsn-1 and swsn-5, and accessory subunits swsn-3, swsn-6, phf-10, dpff-1, swsn-9 and either ham-3/swsn-2.1 or swsn-2.2. May interact with blmp-1. As to expression, broadly expressed in all cell types.

It localises to the nucleus. Its function is as follows. Involved in transcriptional activation and repression of select genes by chromatin remodeling (alteration of DNA-nucleosome topology). Component of SWI/SNF chromatin remodeling complexes that carry out key enzymatic activities, changing chromatin structure by altering DNA-histone contacts within a nucleosome in an ATP-dependent manner. Required for the blmp-1-mediated transcriptional activation or repression of several hypodermal genes such as bed-3. Involved in regulating differentiation, migration and axon pathfinding of specific serotonergic neurons (HSNs). Probably regulates vulva development through the let-60/Ras pathway. May be involved in regulation of developmental processes in the embryo driven by the Wnt pathway. Involved in gonadogenesis. This is SWI/SNF chromatin-remodeling accessory subunit 1 from Caenorhabditis elegans.